The following is a 1032-amino-acid chain: Putative oxidoreductase YgfK (1032 aa).

The region spanning 928–958 (RFQTLHLDAYCNECGNCAQFCPWNGKPYKDK) is the 4Fe-4S ferredoxin-type domain. [4Fe-4S] cluster-binding residues include Cys938, Cys941, Cys944, and Cys948.

[4Fe-4S] cluster serves as cofactor.

Could be an iron-sulfur flavoprotein with NADPH:O(2) oxidoreductase activity. The polypeptide is Putative oxidoreductase YgfK (ygfK) (Escherichia coli O157:H7).